Reading from the N-terminus, the 481-residue chain is Beta-amyrin 16-beta-monooxygenase (481 aa).

Residues L4–L24 traverse the membrane as a helical segment. C428 is a binding site for heme.

This sequence belongs to the cytochrome P450 family. It depends on heme as a cofactor. In terms of tissue distribution, highly expressed in roots. Expressed at very low levels in leaves and petals.

It localises to the membrane. The catalysed reaction is beta-amyrin + reduced [NADPH--hemoprotein reductase] + O2 = maniladiol + oxidized [NADPH--hemoprotein reductase] + H2O + H(+). The enzyme catalyses oleanolate + reduced [NADPH--hemoprotein reductase] + O2 = cochalate + oxidized [NADPH--hemoprotein reductase] + H2O + H(+). Involved in triterpenoid saponin biosynthesis in roots. Catalyzes the hydroxylation of beta-amyrin at the C-16 beta position to form maniladiol. Is also able to oxidize oleanolat to cochalate. Has weak activity catalyzing the three-step oxidation at C-28 of beta-amyrin to form oleanolate. The protein is Beta-amyrin 16-beta-monooxygenase of Platycodon grandiflorus (Balloon flower).